A 414-amino-acid chain; its full sequence is Cyclic di-GMP phosphodiesterase PA4108 (414 aa).

An HD-GYP domain is found at 133–330 (ISASVLRHPN…YPVGALVRLE (198 aa)). A divalent metal cation contacts are provided by histidine 160, histidine 192, aspartate 193, histidine 221, histidine 246, and histidine 247.

As to quaternary structure, monomer.

The enzyme catalyses 3',3'-c-di-GMP + 2 H2O = 2 GMP + 2 H(+). Activated by Mg(2+) and Mn(2+). Phosphodiesterase (PDE) that catalyzes the hydrolysis of cyclic diguanylate (c-di-GMP) to GMP. Hydrolyzes c-di-GMP to GMP in a two-step reaction, via the linear intermediate 5'-phosphoguanylyl(3'-&gt;5')guanosine (pGpG). In vitro, can use pGpG as an alternative substrate and hydrolyze it into GMP. Acts in regulation of motility, synthesis of virulence determinants and biofilm architecture. The polypeptide is Cyclic di-GMP phosphodiesterase PA4108 (Pseudomonas aeruginosa (strain ATCC 15692 / DSM 22644 / CIP 104116 / JCM 14847 / LMG 12228 / 1C / PRS 101 / PAO1)).